A 742-amino-acid polypeptide reads, in one-letter code: Phosphoribosylformylglycinamidine synthase subunit PurL (742 aa).

Residue H54 is part of the active site. Y57 and K96 together coordinate ATP. Mg(2+) is bound at residue E98. Substrate-binding positions include 99 to 102 (SHNH) and R121. The Proton acceptor role is filled by H100. D122 serves as a coordination point for Mg(2+). Position 245 (Q245) interacts with substrate. D273 contacts Mg(2+). Residue 317–319 (ESQ) participates in substrate binding. ATP contacts are provided by D500 and G537. N538 is a binding site for Mg(2+). S540 provides a ligand contact to substrate.

This sequence belongs to the FGAMS family. In terms of assembly, monomer. Part of the FGAM synthase complex composed of 1 PurL, 1 PurQ and 2 PurS subunits.

The protein resides in the cytoplasm. It catalyses the reaction N(2)-formyl-N(1)-(5-phospho-beta-D-ribosyl)glycinamide + L-glutamine + ATP + H2O = 2-formamido-N(1)-(5-O-phospho-beta-D-ribosyl)acetamidine + L-glutamate + ADP + phosphate + H(+). The protein operates within purine metabolism; IMP biosynthesis via de novo pathway; 5-amino-1-(5-phospho-D-ribosyl)imidazole from N(2)-formyl-N(1)-(5-phospho-D-ribosyl)glycinamide: step 1/2. In terms of biological role, part of the phosphoribosylformylglycinamidine synthase complex involved in the purines biosynthetic pathway. Catalyzes the ATP-dependent conversion of formylglycinamide ribonucleotide (FGAR) and glutamine to yield formylglycinamidine ribonucleotide (FGAM) and glutamate. The FGAM synthase complex is composed of three subunits. PurQ produces an ammonia molecule by converting glutamine to glutamate. PurL transfers the ammonia molecule to FGAR to form FGAM in an ATP-dependent manner. PurS interacts with PurQ and PurL and is thought to assist in the transfer of the ammonia molecule from PurQ to PurL. This Geobacillus thermodenitrificans (strain NG80-2) protein is Phosphoribosylformylglycinamidine synthase subunit PurL.